Consider the following 60-residue polypeptide: Mastoparan (60 aa).

Residues 1–27 (MKDTILILFTAFIALLGFFGMSAEALA) form the signal peptide. 4 AXPX repeats span residues 27 to 30 (ADPL), 31 to 34 (ADPS), 35 to 38 (AGPN), and 41 to 44 (ADPE). The propeptide occupies 28–45 (DPLADPSAGPNAEADPEA). Leucine amide is present on leucine 59.

Belongs to the MCD family. Mastoparan subfamily. As to expression, expressed by the venom gland.

The protein localises to the secreted. The protein resides in the target cell membrane. In terms of biological role, mast cell degranulating peptide. Its mast cell degranulation activity may be related to the activation of G-protein coupled receptors in mast cells as well as interaction with other proteins located in cell endosomal membranes in the mast cells. Has a membranolytic activity on human glioblastoma multiforme cells (brain tumor cells) that leads to cell necrosis. This is Mastoparan from Vespa orientalis (Oriental hornet).